The primary structure comprises 215 residues: Chaperone protein TorD (215 aa).

The protein belongs to the TorD/DmsD family. TorD subfamily.

Its subcellular location is the cytoplasm. Functionally, involved in the biogenesis of TorA. Acts on TorA before the insertion of the molybdenum cofactor and, as a result, probably favors a conformation of the apoenzyme that is competent for acquiring the cofactor. The chain is Chaperone protein TorD from Vibrio atlanticus (strain LGP32) (Vibrio splendidus (strain Mel32)).